The following is a 41-amino-acid chain: APGNKAECEREKGYCGFLKCSFPFVVSGKCSRFFFCCKNIW.

Cystine bridges form between C8–C36, C15–C30, and C20–C37.

The protein localises to the secreted. Has antibacterial activity against the Gram-positive bacterium S.aureus 1056 MRSA (MIC=1.25 ug/ml) and the Gram-negative bacterium E.coli O157:H7 (MIC=0.96 ug/ml). Has antifungal activity against the yeast C.albicans 3153A (MIC=6.20 ug/ml). In Struthio camelus (Common ostrich), this protein is Ostricacin-2.